A 106-amino-acid polypeptide reads, in one-letter code: uncharacterized protein (106 aa).

Transmembrane regions (helical) follow at residues 10–30 (VYIQ…VAFV) and 65–85 (LDFA…LLAY).

It is found in the membrane. This is an uncharacterized protein from Saccharomyces cerevisiae (strain ATCC 204508 / S288c) (Baker's yeast).